The sequence spans 167 residues: Large ribosomal subunit protein uL10 (167 aa).

This sequence belongs to the universal ribosomal protein uL10 family. In terms of assembly, part of the ribosomal stalk of the 50S ribosomal subunit. The N-terminus interacts with L11 and the large rRNA to form the base of the stalk. The C-terminus forms an elongated spine to which L12 dimers bind in a sequential fashion forming a multimeric L10(L12)X complex.

Functionally, forms part of the ribosomal stalk, playing a central role in the interaction of the ribosome with GTP-bound translation factors. The polypeptide is Large ribosomal subunit protein uL10 (Latilactobacillus sakei subsp. sakei (strain 23K) (Lactobacillus sakei subsp. sakei)).